Reading from the N-terminus, the 1039-residue chain is Kinesin-like protein KIN-5B (1039 aa).

The region spanning 48–390 (NVQVILRCKP…LDYAYRAKNI (343 aa)) is the Kinesin motor domain. 134–141 (GQTGTGKT) provides a ligand contact to ATP. The disordered stretch occupies residues 1008–1039 (TLSEEHTSLEKISTKQGLGEANNRTPFLEVNK). Residues 1010-1020 (SEEHTSLEKIS) show a composition bias toward basic and acidic residues.

It belongs to the TRAFAC class myosin-kinesin ATPase superfamily. Kinesin family. KIN-5/BimC subfamily.

It is found in the cytoplasm. The protein localises to the cytoskeleton. It localises to the spindle. Functionally, responsible for microtubule translocation. May be important for the organization of phragmoplast-specific arrays of microtubules. Plays an essential role in stabilizing the mitotic spindle. Required during mitotic cytokinesis. The polypeptide is Kinesin-like protein KIN-5B (Arabidopsis thaliana (Mouse-ear cress)).